The sequence spans 98 residues: NADH-ubiquinone oxidoreductase chain 4L (98 aa).

Helical transmembrane passes span methionine 1–methionine 21, leucine 31–isoleucine 51, and isoleucine 61–valine 81.

The protein belongs to the complex I subunit 4L family. As to quaternary structure, core subunit of respiratory chain NADH dehydrogenase (Complex I) which is composed of 45 different subunits.

Its subcellular location is the mitochondrion inner membrane. The catalysed reaction is a ubiquinone + NADH + 5 H(+)(in) = a ubiquinol + NAD(+) + 4 H(+)(out). Core subunit of the mitochondrial membrane respiratory chain NADH dehydrogenase (Complex I) which catalyzes electron transfer from NADH through the respiratory chain, using ubiquinone as an electron acceptor. Part of the enzyme membrane arm which is embedded in the lipid bilayer and involved in proton translocation. The chain is NADH-ubiquinone oxidoreductase chain 4L (MT-ND4L) from Chalinolobus tuberculatus (New Zealand long-tailed bat).